The chain runs to 1034 residues: Glycine dehydrogenase (decarboxylating) B, mitochondrial (1034 aa).

A mitochondrion-targeting transit peptide spans 1 to 63 (MERARRLAIL…LNGFGSQVRT (63 aa)). Lysine 770 carries the N6-(pyridoxal phosphate)lysine modification.

This sequence belongs to the GcvP family. Homodimer. The glycine cleavage system is composed of four proteins: P, T, L and H. Requires pyridoxal 5'-phosphate as cofactor.

It is found in the mitochondrion. The catalysed reaction is N(6)-[(R)-lipoyl]-L-lysyl-[glycine-cleavage complex H protein] + glycine + H(+) = N(6)-[(R)-S(8)-aminomethyldihydrolipoyl]-L-lysyl-[glycine-cleavage complex H protein] + CO2. The glycine cleavage system catalyzes the degradation of glycine. The P protein binds the alpha-amino group of glycine through its pyridoxal phosphate cofactor; CO(2) is released and the remaining methylamine moiety is then transferred to the lipoamide cofactor of the H protein. This chain is Glycine dehydrogenase (decarboxylating) B, mitochondrial (GDCSPB), found in Flaveria pringlei.